The sequence spans 143 residues: Ninjurin-2 (143 aa).

Over 1–61 the chain is Extracellular; that stretch reads MESDRETIHL…KSVLQQGPFA (61 aa). A helix alpha1 region spans residues 26–38; it reads NFYATKKSVAESM. The interval 39-58 is helix alpha2; the sequence is LDVALFMSNAMRLKSVLQQG. The helical transmembrane segment at 62–93 threads the bilayer; sequence EYYTTLVTLIIVSLLLQVVISLLLVFIAILNL. The Cytoplasmic segment spans residues 94 to 97; it reads NEVE. Residues 98-127 traverse the membrane as a helical segment; sequence NQRHLNKLNNAATILVFITVVINIFITAFG. Lysine 104 serves as a coordination point for cholesterol. Residues 128–143 are Extracellular-facing; the sequence is AHHAASMAARTSSNPI.

This sequence belongs to the ninjurin family. In terms of assembly, homooligomer; in response to stimuli, homooligomerizes into filaments. In contrast to NINJ1, the filament is curved toward the intracellular space, preventing its circularization on a relatively flat membrane to mediate plasma membrane rupture: curvature is caused by cholesterol-binding at the cytoplasmic leaflet.

It localises to the cell membrane. Its role in unclear. In contrast to NINJ1 paralog, does not mediate plasma membrane rupture (cytolysis) downstream of necroptotic and pyroptotic programmed cell death. While it is able to oligomerize and form filaments, filaments are curved toward the intracellular space, preventing circularization to mediate plasma membrane rupture. May act as a homophilic transmembrane adhesion molecule involved in nerve regeneration. Promotes axonal growth. In Mus musculus (Mouse), this protein is Ninjurin-2 (Ninj2).